A 71-amino-acid polypeptide reads, in one-letter code: Small ribosomal subunit protein bS21 (71 aa).

Over residues 48–59 (KAAAAVKRHAKK) the composition is skewed to basic residues. A disordered region spans residues 48–71 (KAAAAVKRHAKKVQRENRKFQRLY). The span at 60–71 (VQRENRKFQRLY) shows a compositional bias: basic and acidic residues.

This sequence belongs to the bacterial ribosomal protein bS21 family.

The sequence is that of Small ribosomal subunit protein bS21 from Teredinibacter turnerae (strain ATCC 39867 / T7901).